The chain runs to 122 residues: Fluoride-specific ion channel FluC (122 aa).

The next 4 helical transmembrane spans lie at 4-24 (LAVL…SIFI), 33-53 (LGTM…SIYL), 66-86 (LLIT…LEGI), and 95-115 (LKAF…VALG). Residues glycine 73 and threonine 76 each contribute to the Na(+) site.

This sequence belongs to the fluoride channel Fluc/FEX (TC 1.A.43) family.

The protein resides in the cell inner membrane. The enzyme catalyses fluoride(in) = fluoride(out). Na(+) is not transported, but it plays an essential structural role and its presence is essential for fluoride channel function. In terms of biological role, fluoride-specific ion channel. Important for reducing fluoride concentration in the cell, thus reducing its toxicity. This is Fluoride-specific ion channel FluC from Hydrogenobaculum sp. (strain Y04AAS1).